Reading from the N-terminus, the 248-residue chain is ATP synthase subunit a, chloroplastic (248 aa).

The next 5 helical transmembrane spans lie at 35 to 55 (GQVF…SFLG), 94 to 114 (VPYI…GALI), 133 to 153 (INTT…AGLS), 202 to 222 (VFTL…GLFA), and 224 to 244 (SIQA…AMEG).

It belongs to the ATPase A chain family. F-type ATPases have 2 components, CF(1) - the catalytic core - and CF(0) - the membrane proton channel. CF(1) has five subunits: alpha(3), beta(3), gamma(1), delta(1), epsilon(1). CF(0) has four main subunits: a, b, b' and c.

It localises to the plastid. The protein localises to the chloroplast thylakoid membrane. Functionally, key component of the proton channel; it plays a direct role in the translocation of protons across the membrane. The polypeptide is ATP synthase subunit a, chloroplastic (Pyropia yezoensis (Susabi-nori)).